Reading from the N-terminus, the 230-residue chain is Orotidine 5'-phosphate decarboxylase (230 aa).

Residues aspartate 10, lysine 32, 59–68, threonine 119, arginine 180, glutamine 189, glycine 209, and arginine 210 contribute to the substrate site; that span reads DLKYHDIPNT. Lysine 61 acts as the Proton donor in catalysis.

This sequence belongs to the OMP decarboxylase family. Type 1 subfamily. As to quaternary structure, homodimer.

The catalysed reaction is orotidine 5'-phosphate + H(+) = UMP + CO2. Its pathway is pyrimidine metabolism; UMP biosynthesis via de novo pathway; UMP from orotate: step 2/2. Catalyzes the decarboxylation of orotidine 5'-monophosphate (OMP) to uridine 5'-monophosphate (UMP). This Haemophilus influenzae (strain 86-028NP) protein is Orotidine 5'-phosphate decarboxylase.